The following is a 257-amino-acid chain: uncharacterized protein (257 aa).

Positions 1-22 are cleaved as a signal peptide; sequence MGYLKRFALYISVMILIFAIAG. Residue Cys-23 is the site of N-palmitoyl cysteine attachment. A lipid anchor (S-diacylglycerol cysteine) is attached at Cys-23.

Belongs to the staphylococcal tandem lipoprotein family.

Its subcellular location is the cell membrane. This is an uncharacterized protein from Staphylococcus aureus (strain USA300).